A 446-amino-acid chain; its full sequence is MRVTDIISCALLQASIALSTPVEELGAKAVVAKRFPPVPFLPGKASSVPGSRNKTCMLKALGGGKDDSANILSAVKQCNNGGHVVFPKGQQFTIGTALDLTFLNGIDLDIQGTIQFTNDTDYWQANSFKQVFQNATTFFQLGGKDINVYGGGTLDGNGQAWYDLYAKDIYILRPILFGLIGAKNAKISDLKFRYSPQWYTLVANSSQVVFSNIDIFGDSKSKNPAKNTDGWDTYRSDNIIIQNSNINNGDDCVSFKPNSTNILVQNLVCNGSHGISVGSLGQYPGEVDIVENILVRNISMSNASDGARIKVWPGASSALSGDLQGGGGSGAVRNVTYDGMIVKNVDYAIEITQCYGQKNLTLCNQFPSNLTISDITIKNFKGTTSKKYDPRVGYVVCSSPKVCSDISIENIDVKSPSGTNLFTCANAEGIQSQVNCTVEGDKGGHS.

Positions 1-17 (MRVTDIISCALLQASIA) are cleaved as a signal peptide. N-linked (GlcNAc...) asparagine glycosylation is found at asparagine 53, asparagine 118, asparagine 134, and asparagine 204. One copy of the PbH1 1 repeat lies at 236 to 257 (SDNIIIQNSNINNGDDCVSFKP). The Proton donor role is filled by aspartate 250. Cysteine 252 and cysteine 269 are joined by a disulfide. N-linked (GlcNAc...) asparagine glycans are attached at residues asparagine 258 and asparagine 270. 3 PbH1 repeats span residues 259-279 (STNILVQNLVCNGSHGISVGS), 290-311 (VENILVRNISMSNASDGARIKV), and 332-353 (VRNVTYDGMIVKNVDYAIEITQ). Residue histidine 273 is part of the active site. Residues asparagine 297, asparagine 302, asparagine 334, asparagine 359, and asparagine 369 are each glycosylated (N-linked (GlcNAc...) asparagine). PbH1 repeat units follow at residues 367 to 398 (PSNLTISDITIKNFKGTTSKKYDPRVGYVVCS) and 403 to 434 (CSDISIENIDVKSPSGTNLFTCANAEGIQSQV). Cystine bridges form between cysteine 397/cysteine 403 and cysteine 424/cysteine 436. N-linked (GlcNAc...) asparagine glycosylation is present at asparagine 435.

Belongs to the glycosyl hydrolase 28 family.

It is found in the secreted. The catalysed reaction is [(1-&gt;4)-alpha-D-galacturonosyl](n) + H2O = alpha-D-galacturonate + [(1-&gt;4)-alpha-D-galacturonosyl](n-1). Its function is as follows. Hydrolysis of 1,4-alpha-D-galactosiduronic linkages in pectate and other galacturonans. This is Exopolygalacturonase (PGX1) from Cochliobolus carbonum (Maize leaf spot fungus).